A 345-amino-acid polypeptide reads, in one-letter code: Heat-inducible transcription repressor HrcA (345 aa).

Belongs to the HrcA family.

Negative regulator of class I heat shock genes (grpE-dnaK-dnaJ and groELS operons). Prevents heat-shock induction of these operons. The chain is Heat-inducible transcription repressor HrcA from Zymomonas mobilis subsp. mobilis (strain ATCC 31821 / ZM4 / CP4).